The primary structure comprises 183 residues: Dual-action ribosomal maturation protein DarP (183 aa).

The protein belongs to the DarP family.

Its subcellular location is the cytoplasm. Functionally, member of a network of 50S ribosomal subunit biogenesis factors which assembles along the 30S-50S interface, preventing incorrect 23S rRNA structures from forming. Promotes peptidyl transferase center (PTC) maturation. In Shigella flexneri serotype 5b (strain 8401), this protein is Dual-action ribosomal maturation protein DarP.